Consider the following 90-residue polypeptide: Protein LURE 1.2 (90 aa).

Positions 1–19 (MKLPIIFLTLLIFVSSCTS) are cleaved as a signal peptide. An N-linked (GlcNAc...) asparagine glycan is attached at Asn23. Disulfide bonds link Cys58-Cys75, Cys61-Cys82, and Cys65-Cys84. The PRK6 binding stretch occupies residues 67 to 87 (RRGKYIRTCSFERKLCRCSIS).

The protein belongs to the DEFL family. As to quaternary structure, interacts with MDIS1, MIK1, MIK2 and TDR/PXY, but not with MDIS2. Binds to PRK6 LRRs. Expressed in the pistil. Detected exclusively in the synergid cells.

It localises to the secreted. Functionally, pollen tube attractants guiding pollen tubes to the ovular micropyle. Attracts specifically pollen tubes from A.thaliana, but not those from A.lyrata. Triggers endocytosis of MDIS1 in the pollen tube tip. The sequence is that of Protein LURE 1.2 from Arabidopsis thaliana (Mouse-ear cress).